Consider the following 86-residue polypeptide: MKVSVLITLAVLGVMFVWASAAELEQSGSDQKDSPAWLKSMERIFQSEERECRKMFGGCSKHEDCCAHLACKRTFNYCAWDGSFSK.

Residues 1–21 (MKVSVLITLAVLGVMFVWASA) form the signal peptide. Residues 22–51 (AELEQSGSDQKDSPAWLKSMERIFQSEERE) constitute a propeptide that is removed on maturation. Cystine bridges form between Cys52/Cys66, Cys59/Cys71, and Cys65/Cys78.

Belongs to the neurotoxin 10 (Hwtx-1) family. 41 (Jztx-36) subfamily. Expressed by the venom gland.

The protein resides in the secreted. In terms of biological role, probable ion channel inhibitor. This Chilobrachys guangxiensis (Chinese earth tiger tarantula) protein is U13-theraphotoxin-Cg1b.